A 200-amino-acid chain; its full sequence is Glycosyl hydrolase family 19 domain-containing protein HI_1415 (200 aa).

The protein belongs to the glycosyl hydrolase 19 family.

The protein is Glycosyl hydrolase family 19 domain-containing protein HI_1415 of Haemophilus influenzae (strain ATCC 51907 / DSM 11121 / KW20 / Rd).